Here is a 79-residue protein sequence, read N- to C-terminus: ATP synthase subunit c (79 aa).

2 helical membrane passes run 11 to 31 and 59 to 79; these read IAVAVMIGLAAIGAAVGIGIL and LVDAIPMIAVGLGLYMLFAVI.

It belongs to the ATPase C chain family. As to quaternary structure, F-type ATPases have 2 components, F(1) - the catalytic core - and F(0) - the membrane proton channel. F(1) has five subunits: alpha(3), beta(3), gamma(1), delta(1), epsilon(1). F(0) has three main subunits: a(1), b(2) and c(10-14). The alpha and beta chains form an alternating ring which encloses part of the gamma chain. F(1) is attached to F(0) by a central stalk formed by the gamma and epsilon chains, while a peripheral stalk is formed by the delta and b chains.

It is found in the cell membrane. Functionally, f(1)F(0) ATP synthase produces ATP from ADP in the presence of a proton or sodium gradient. F-type ATPases consist of two structural domains, F(1) containing the extramembraneous catalytic core and F(0) containing the membrane proton channel, linked together by a central stalk and a peripheral stalk. During catalysis, ATP synthesis in the catalytic domain of F(1) is coupled via a rotary mechanism of the central stalk subunits to proton translocation. Its function is as follows. Key component of the F(0) channel; it plays a direct role in translocation across the membrane. A homomeric c-ring of between 10-14 subunits forms the central stalk rotor element with the F(1) delta and epsilon subunits. This is ATP synthase subunit c from Buchnera aphidicola subsp. Baizongia pistaciae (strain Bp).